The chain runs to 104 residues: AVIToxin-VAR1 (104 aa).

The first 19 residues, 1-19 (MRSLLCAPLLLLLLSAGES), serve as a signal peptide directing secretion. Cystine bridges form between Cys-26-Cys-38, Cys-32-Cys-50, Cys-37-Cys-78, Cys-60-Cys-86, and Cys-80-Cys-96.

Belongs to the AVIT (prokineticin) family. As to expression, expressed by the venom gland.

It is found in the secreted. Its function is as follows. Potent agonist for both PKR1/PROKR1 and PKR2/PROKR2. Potently contracts gastrointestinal (GI) smooth muscle. This is AVIToxin-VAR1 from Varanus varius (Lace monitor lizard).